A 210-amino-acid chain; its full sequence is Prolactin (210 aa).

The N-terminal stretch at 1–23 (MAEGSRLYFAVTVLMCAFVSING) is a signal peptide. Cystine bridges form between cysteine 69–cysteine 183 and cysteine 200–cysteine 210.

The protein belongs to the somatotropin/prolactin family. Pituitary gland.

It is found in the secreted. In Hypophthalmichthys nobilis (Bighead carp), this protein is Prolactin (prl).